The sequence spans 884 residues: Bifunctional heparan sulfate N-deacetylase/N-sulfotransferase 2 (884 aa).

The Cytoplasmic portion of the chain corresponds to 1–18; sequence MLKLWKVVRPARQLELHR. Residues 19 to 39 form a helical; Signal-anchor for type II membrane protein membrane-spanning segment; it reads LILLLIAFSLGSMGFLAYYVS. Residues 40–884 are Lumenal-facing; the sequence is TSPKAKEPLP…REELQHSSSG (845 aa). Positions 41–598 are heparan sulfate N-deacetylase 2; that stretch reads SPKAKEPLPL…KRHKDIWSKE (558 aa). The interval 49 to 82 is disordered; sequence PLPLGDCSSSGAAGGPGPVRPPVPPRPPRPPETA. Residues 66–79 are compositionally biased toward pro residues; sequence PVRPPVPPRPPRPP. Residues Asn351 and Asn401 are each glycosylated (N-linked (GlcNAc...) asparagine). A heparan sulfate N-sulfotransferase 2 region spans residues 599–884; that stretch reads KTCDRLPKFL…REELQHSSSG (286 aa). Catalysis depends on Lys614, which acts as the For sulfotransferase activity. Residue 614 to 618 coordinates 3'-phosphoadenylyl sulfate; sequence KTGTT. Asn667 carries an N-linked (GlcNAc...) asparagine glycan. 3'-phosphoadenylyl sulfate is bound at residue Ser712. N-linked (GlcNAc...) asparagine glycosylation is found at Asn727 and Asn803. Residues Cys818 and Cys828 are joined by a disulfide bond. Residue 833 to 837 coordinates 3'-phosphoadenylyl sulfate; the sequence is KGRKY.

This sequence belongs to the sulfotransferase 1 family. NDST subfamily. Monomer.

It is found in the golgi apparatus membrane. It catalyses the reaction alpha-D-glucosaminyl-[heparan sulfate](n) + 3'-phosphoadenylyl sulfate = N-sulfo-alpha-D-glucosaminyl-[heparan sulfate](n) + adenosine 3',5'-bisphosphate + 2 H(+). It functions in the pathway glycan metabolism; heparan sulfate biosynthesis. Its pathway is glycan metabolism; heparin biosynthesis. Functionally, essential bifunctional enzyme that catalyzes both the N-deacetylation and the N-sulfation of glucosamine (GlcNAc) of the glycosaminoglycan in heparan sulfate. Modifies the GlcNAc-GlcA disaccharide repeating sugar backbone to make N-sulfated heparosan, a prerequisite substrate for later modifications in heparin biosynthesis. Plays a role in determining the extent and pattern of sulfation of heparan sulfate. Required for the exosomal release of SDCBP, CD63 and syndecan. The polypeptide is Bifunctional heparan sulfate N-deacetylase/N-sulfotransferase 2 (NDST2) (Bos taurus (Bovine)).